The sequence spans 160 residues: Eukaryotic translation initiation factor 5A (160 aa).

Over residues 1-13 the composition is skewed to basic and acidic residues; the sequence is MSDSEEHHFESKA. Residues 1–22 form a disordered region; it reads MSDSEEHHFESKADAGASKTYP. A Hypusine modification is found at lysine 53.

The protein belongs to the eIF-5A family. Post-translationally, lys-53 undergoes hypusination, a unique post-translational modification that consists in the addition of a butylamino group from spermidine to lysine side chain, leading to the formation of the unusual amino acid hypusine. eIF-5As are the only known proteins to undergo this modification, which is essential for their function.

Functionally, translation factor that promotes translation elongation and termination, particularly upon ribosome stalling at specific amino acid sequence contexts. Binds between the exit (E) and peptidyl (P) site of the ribosome and promotes rescue of stalled ribosome: specifically required for efficient translation of polyproline-containing peptides as well as other motifs that stall the ribosome. Acts as a ribosome quality control (RQC) cofactor by joining the RQC complex to facilitate peptidyl transfer during CAT tailing step. This Zea mays (Maize) protein is Eukaryotic translation initiation factor 5A (TIF5A).